Consider the following 269-residue polypeptide: 5'-nucleotidase SurE (269 aa).

The a divalent metal cation site is built by Asp8, Asp9, Ser39, and Asn92.

The protein belongs to the SurE nucleotidase family. The cofactor is a divalent metal cation.

Its subcellular location is the cytoplasm. The enzyme catalyses a ribonucleoside 5'-phosphate + H2O = a ribonucleoside + phosphate. Nucleotidase that shows phosphatase activity on nucleoside 5'-monophosphates. This chain is 5'-nucleotidase SurE, found in Psychrobacter cryohalolentis (strain ATCC BAA-1226 / DSM 17306 / VKM B-2378 / K5).